Consider the following 605-residue polypeptide: Elongation factor 4 (605 aa).

The 184-residue stretch at 9–192 (CRIRNFCIIA…SIVHRIPPPA (184 aa)) folds into the tr-type G domain. GTP-binding positions include 21-26 (DHGKST) and 139-142 (NKID).

This sequence belongs to the TRAFAC class translation factor GTPase superfamily. Classic translation factor GTPase family. LepA subfamily.

It localises to the cell inner membrane. It carries out the reaction GTP + H2O = GDP + phosphate + H(+). Required for accurate and efficient protein synthesis under certain stress conditions. May act as a fidelity factor of the translation reaction, by catalyzing a one-codon backward translocation of tRNAs on improperly translocated ribosomes. Back-translocation proceeds from a post-translocation (POST) complex to a pre-translocation (PRE) complex, thus giving elongation factor G a second chance to translocate the tRNAs correctly. Binds to ribosomes in a GTP-dependent manner. In Chlorobium chlorochromatii (strain CaD3), this protein is Elongation factor 4.